Reading from the N-terminus, the 61-residue chain is Small ribosomal subunit protein uS14 (61 aa).

Zn(2+) contacts are provided by Cys-24, Cys-27, Cys-40, and Cys-43.

The protein belongs to the universal ribosomal protein uS14 family. Zinc-binding uS14 subfamily. In terms of assembly, part of the 30S ribosomal subunit. Contacts proteins S3 and S10. Zn(2+) is required as a cofactor.

Binds 16S rRNA, required for the assembly of 30S particles and may also be responsible for determining the conformation of the 16S rRNA at the A site. This Borrelia hermsii (strain HS1 / DAH) protein is Small ribosomal subunit protein uS14.